The chain runs to 244 residues: Phosphoadenosine 5'-phosphosulfate reductase (244 aa).

Cys239 (nucleophile; cysteine thiosulfonate intermediate) is an active-site residue.

This sequence belongs to the PAPS reductase family. CysH subfamily.

Its subcellular location is the cytoplasm. The enzyme catalyses [thioredoxin]-disulfide + sulfite + adenosine 3',5'-bisphosphate + 2 H(+) = [thioredoxin]-dithiol + 3'-phosphoadenylyl sulfate. Its pathway is sulfur metabolism; hydrogen sulfide biosynthesis; sulfite from sulfate: step 3/3. Catalyzes the formation of sulfite from phosphoadenosine 5'-phosphosulfate (PAPS) using thioredoxin as an electron donor. The polypeptide is Phosphoadenosine 5'-phosphosulfate reductase (Cronobacter sakazakii (strain ATCC BAA-894) (Enterobacter sakazakii)).